Reading from the N-terminus, the 273-residue chain is Large ribosomal subunit protein uL2cy (273 aa).

Disordered stretches follow at residues 1 to 27 and 224 to 273; these read MAIHLYKTSTPSTRNGAVDSQVKSNPR and NPVD…RRRK.

Belongs to the universal ribosomal protein uL2 family. As to quaternary structure, part of the 50S ribosomal subunit.

It localises to the plastid. The protein localises to the chloroplast. The chain is Large ribosomal subunit protein uL2cy (rpl2-B) from Liriodendron tulipifera (Tuliptree).